A 277-amino-acid polypeptide reads, in one-letter code: Protein HEAT-INDUCED TAS1 TARGET 1 (277 aa).

The protein belongs to the heat induced plant HTT protein family. In terms of assembly, interacts with the heat shock proteins HSP70-14 and At2g33735/HSP40, and with NFYC2 in both cytoplasm and nucleus. In terms of tissue distribution, expressed ubiquitously, including in seedlings, leaves, stems, inflorescences and siliques.

The protein resides in the cytoplasm. It is found in the nucleus. In terms of biological role, mediates both basal and acquired thermotolerance via HSFA1s-directed pathways (e.g. HSFA1A, HSFA1B, and HSFA1D). Triggers the expression of HSFA1A and HSFA1B. In Arabidopsis thaliana (Mouse-ear cress), this protein is Protein HEAT-INDUCED TAS1 TARGET 1.